We begin with the raw amino-acid sequence, 308 residues long: Transaldolase (308 aa).

The active-site Schiff-base intermediate with substrate is the Lys-125.

It belongs to the transaldolase family. Type 1 subfamily. In terms of assembly, homodimer.

Its subcellular location is the cytoplasm. The catalysed reaction is D-sedoheptulose 7-phosphate + D-glyceraldehyde 3-phosphate = D-erythrose 4-phosphate + beta-D-fructose 6-phosphate. Its pathway is carbohydrate degradation; pentose phosphate pathway; D-glyceraldehyde 3-phosphate and beta-D-fructose 6-phosphate from D-ribose 5-phosphate and D-xylulose 5-phosphate (non-oxidative stage): step 2/3. Its function is as follows. Transaldolase is important for the balance of metabolites in the pentose-phosphate pathway. In Ectopseudomonas mendocina (strain ymp) (Pseudomonas mendocina), this protein is Transaldolase.